The primary structure comprises 434 residues: UPF0597 protein CLI_2075 (434 aa).

This sequence belongs to the UPF0597 family.

This Clostridium botulinum (strain Langeland / NCTC 10281 / Type F) protein is UPF0597 protein CLI_2075.